Reading from the N-terminus, the 228-residue chain is ATP-dependent dethiobiotin synthetase BioD (228 aa).

Residue 14-19 participates in ATP binding; it reads DAGKTL. Thr-18 is a Mg(2+) binding site. The active site involves Lys-39. Residues Asp-56, 117-120, and 206-208 contribute to the ATP site; these read EGAG and PRL. Residues Asp-56 and Glu-117 each contribute to the Mg(2+) site.

Belongs to the dethiobiotin synthetase family. In terms of assembly, homodimer. Mg(2+) is required as a cofactor.

It is found in the cytoplasm. The catalysed reaction is (7R,8S)-7,8-diammoniononanoate + CO2 + ATP = (4R,5S)-dethiobiotin + ADP + phosphate + 3 H(+). It functions in the pathway cofactor biosynthesis; biotin biosynthesis; biotin from 7,8-diaminononanoate: step 1/2. Its function is as follows. Catalyzes a mechanistically unusual reaction, the ATP-dependent insertion of CO2 between the N7 and N8 nitrogen atoms of 7,8-diaminopelargonic acid (DAPA, also called 7,8-diammoniononanoate) to form a ureido ring. The chain is ATP-dependent dethiobiotin synthetase BioD from Cellvibrio japonicus (strain Ueda107) (Pseudomonas fluorescens subsp. cellulosa).